We begin with the raw amino-acid sequence, 259 residues long: uncharacterized protein (259 aa).

The first 22 residues, 1-22 (MKHSKKLLLCISFLLITFFISG), serve as a signal peptide directing secretion. Residue cysteine 23 is the site of N-palmitoyl cysteine attachment. A lipid anchor (S-diacylglycerol cysteine) is attached at cysteine 23.

The protein belongs to the staphylococcal tandem lipoprotein family.

It localises to the cell membrane. This is an uncharacterized protein from Staphylococcus epidermidis (strain ATCC 35984 / DSM 28319 / BCRC 17069 / CCUG 31568 / BM 3577 / RP62A).